The sequence spans 447 residues: 2-oxoadipate dioxygenase/decarboxylase (447 aa).

The 2-oxoadipate site is built by His68, Arg72, and His224. His68 is a binding site for Fe(2+). Fe(2+) contacts are provided by His224 and Glu290. Val391 provides a ligand contact to 2-oxoadipate.

This sequence belongs to the 2-oxoadipate dioxygenase/decarboxylase family. Fe(2+) serves as cofactor.

It carries out the reaction 2-oxoadipate + O2 = (R)-2-hydroxyglutarate + CO2. Functionally, catalyzes the decarboxylation and hydroxylation of 2-oxoadipate (2OA) to form D-2-hydroxyglutarate (D-2-HGA). The sequence is that of 2-oxoadipate dioxygenase/decarboxylase (ydcJ) from Escherichia coli (strain K12).